The primary structure comprises 56 residues: Large ribosomal subunit protein bL32 (56 aa).

A disordered region spans residues 1-28 (MAVQQNRKTRSKRGMRRSHDALTTAALS). The span at 7–16 (RKTRSKRGMR) shows a compositional bias: basic residues.

The protein belongs to the bacterial ribosomal protein bL32 family.

This chain is Large ribosomal subunit protein bL32, found in Vibrio vulnificus (strain CMCP6).